Consider the following 328-residue polypeptide: Delta(3,5)-Delta(2,4)-dienoyl-CoA isomerase, mitochondrial (328 aa).

Residues 1-33 (MAAGIVASRRLRDLLTRRLTGSNYPGLSISLRL) constitute a mitochondrion transit peptide. Substrate is bound by residues 116–120 (AGIDL) and G174. Residue K231 is modified to N6-succinyllysine. Residue S268 is modified to Phosphoserine. The Microbody targeting signal signature appears at 326-328 (SKL). Position 327 is an N6-acetyllysine (K327).

It belongs to the enoyl-CoA hydratase/isomerase family. As to quaternary structure, homohexamer.

It localises to the mitochondrion. The protein resides in the peroxisome. It carries out the reaction (3E,5Z)-octadienoyl-CoA = (2E,4E)-octadienoyl-CoA. The catalysed reaction is (3E,5Z,8Z,11Z,14Z)-eicosapentaenoyl-CoA = (2E,4E,8Z,11Z,14Z)-eicosapentaenoyl-CoA. The protein operates within lipid metabolism; fatty acid beta-oxidation. Its function is as follows. Isomerization of 3-trans,5-cis-dienoyl-CoA to 2-trans,4-trans-dienoyl-CoA. The polypeptide is Delta(3,5)-Delta(2,4)-dienoyl-CoA isomerase, mitochondrial (Homo sapiens (Human)).